Here is a 330-residue protein sequence, read N- to C-terminus: uncharacterized protein (330 aa).

The next 10 membrane-spanning stretches (helical) occupy residues 27–47, 56–76, 90–110, 119–139, 147–167, 176–196, 206–226, 243–263, 270–290, and 294–314; these read MGAY…VVVG, VFLS…MLLF, VFVL…CLLY, ESGI…FFLL, TLIG…FGAG, LFGN…TLMA, LAIS…FALF, YVLY…YSGV, VSGI…GVIL, and FEFV…VTVI. 2 consecutive EamA domains span residues 38–163 and 187–314; these read AIVG…AINL and IGEA…VTVI.

Belongs to the EamA transporter family.

The protein resides in the cell membrane. This is an uncharacterized protein from Bacillus subtilis (strain 168).